The chain runs to 779 residues: Phosphatidylinositol 4-phosphate 5-kinase 4 (779 aa).

A disordered region spans residues 20–61 (QQAKKRANSIFGTVSVAPQTDDDATTTTEENDDETSTNRSSI). Acidic residues predominate over residues 39-54 (TDDDATTTTEENDDET). MORN repeat units lie at residues 77-99 (YTGQ…DGCM), 100-122 (YIGD…SGAT), 123-145 (YEGE…SGDT), 146-168 (YKGQ…NGDV), 169-191 (YDGE…DGSY), 192-214 (YMGE…DGNR), 215-237 (YDGF…DGSF), and 238-259 (YVGH…SGDD). Residues 382–775 (TISKGHRNYE…RFRDFIFKVF (394 aa)) form the PIPK domain. The activation loop stretch occupies residues 735–756 (YDISKKLEHAYKSIQYDPTSIS).

It carries out the reaction a 1,2-diacyl-sn-glycero-3-phospho-(1D-myo-inositol 4-phosphate) + ATP = a 1,2-diacyl-sn-glycero-3-phospho-(1D-myo-inositol-4,5-bisphosphate) + ADP + H(+). The sequence is that of Phosphatidylinositol 4-phosphate 5-kinase 4 (PIP5K4) from Arabidopsis thaliana (Mouse-ear cress).